Reading from the N-terminus, the 212-residue chain is ATP-dependent dethiobiotin synthetase BioD (212 aa).

ATP is bound at residue 12–17; the sequence is DCGKTF. A Mg(2+)-binding site is contributed by T16. Residue K33 is part of the active site. S37 is a substrate binding site. ATP contacts are provided by residues D50, 110–113, and 170–171; these read EGAG and NC. The Mg(2+) site is built by D50 and E110.

It belongs to the dethiobiotin synthetase family. Homodimer. Requires Mg(2+) as cofactor.

It localises to the cytoplasm. The catalysed reaction is (7R,8S)-7,8-diammoniononanoate + CO2 + ATP = (4R,5S)-dethiobiotin + ADP + phosphate + 3 H(+). The protein operates within cofactor biosynthesis; biotin biosynthesis; biotin from 7,8-diaminononanoate: step 1/2. In terms of biological role, catalyzes a mechanistically unusual reaction, the ATP-dependent insertion of CO2 between the N7 and N8 nitrogen atoms of 7,8-diaminopelargonic acid (DAPA, also called 7,8-diammoniononanoate) to form a ureido ring. The polypeptide is ATP-dependent dethiobiotin synthetase BioD (Legionella pneumophila (strain Corby)).